The primary structure comprises 174 residues: MNYFELFKFSPAFDIDTALLAERYRELQRAVHPDKFANDTEQQKLLSVQRTAQVNDGFQTLKDPIRRAEHMLSLRGIELSHETTTVKDTGFLMQQMEWREALEDIRDSADPQASIDELYQSFAQYRAQLTQQLTQLLTSEQAEDALLAADQVRKLKFMAKLHDELTRVEDALLD.

Residues 2 to 74 (NYFELFKFSP…IRRAEHMLSL (73 aa)) form the J domain.

It belongs to the HscB family. In terms of assembly, interacts with HscA and stimulates its ATPase activity.

Functionally, co-chaperone involved in the maturation of iron-sulfur cluster-containing proteins. Seems to help targeting proteins to be folded toward HscA. This chain is Co-chaperone protein HscB homolog, found in Shewanella baltica (strain OS185).